Here is a 338-residue protein sequence, read N- to C-terminus: Lipoate-protein ligase A (338 aa).

One can recognise a BPL/LPL catalytic domain in the interval 29–216 (PATQRVLFLW…AFFAHYGERV (188 aa)). Residues Arg-71, 76–79 (GAVF), and Lys-134 each bind ATP. Residue Lys-134 participates in (R)-lipoate binding.

This sequence belongs to the LplA family. As to quaternary structure, monomer.

It localises to the cytoplasm. The catalysed reaction is L-lysyl-[lipoyl-carrier protein] + (R)-lipoate + ATP = N(6)-[(R)-lipoyl]-L-lysyl-[lipoyl-carrier protein] + AMP + diphosphate + H(+). The protein operates within protein modification; protein lipoylation via exogenous pathway; protein N(6)-(lipoyl)lysine from lipoate: step 1/2. Its pathway is protein modification; protein lipoylation via exogenous pathway; protein N(6)-(lipoyl)lysine from lipoate: step 2/2. Its function is as follows. Catalyzes both the ATP-dependent activation of exogenously supplied lipoate to lipoyl-AMP and the transfer of the activated lipoyl onto the lipoyl domains of lipoate-dependent enzymes. This is Lipoate-protein ligase A from Salmonella agona (strain SL483).